The sequence spans 273 residues: MAIHLYKTSTPSTRNGAVDSQVKSNPRNNLIYGQHHCGKGRNARGIITAGHRGGGHKRLYRKIDFRRNEKDISGRIVTIEYDPNRNAYICLIHYGDGEKRYILHPRGAIIGDTIVSGTEVPISMGNALPLTDMPLGTAIHNIEITLGKGGQLARAAGAVAKLIAKEGKSATLRLPSGEVRLIYKNCLATVGQVGNVGVNQKNLGRAGSKCWLGKRPVVRGVAMNPVDHPHGGGEGRAPIGRKKPTTPWGYPALGRRSRKRNKYSDIYILRRRK.

Disordered stretches follow at residues Met1–Val22 and Met223–Gly254.

This sequence belongs to the universal ribosomal protein uL2 family. In terms of assembly, part of the 50S ribosomal subunit.

The protein resides in the plastid. It localises to the chloroplast. This Drimys granadensis protein is Large ribosomal subunit protein uL2cz/uL2cy (rpl2-A).